A 427-amino-acid chain; its full sequence is Glutamate-1-semialdehyde 2,1-aminomutase (427 aa).

K266 is subject to N6-(pyridoxal phosphate)lysine.

Belongs to the class-III pyridoxal-phosphate-dependent aminotransferase family. HemL subfamily. As to quaternary structure, homodimer. Requires pyridoxal 5'-phosphate as cofactor.

It is found in the cytoplasm. It catalyses the reaction (S)-4-amino-5-oxopentanoate = 5-aminolevulinate. It functions in the pathway porphyrin-containing compound metabolism; protoporphyrin-IX biosynthesis; 5-aminolevulinate from L-glutamyl-tRNA(Glu): step 2/2. This Aromatoleum aromaticum (strain DSM 19018 / LMG 30748 / EbN1) (Azoarcus sp. (strain EbN1)) protein is Glutamate-1-semialdehyde 2,1-aminomutase.